Reading from the N-terminus, the 297-residue chain is Homoserine kinase (297 aa).

82-92 provides a ligand contact to ATP; it reads PLTRGLGSSAS.

Belongs to the GHMP kinase family. Homoserine kinase subfamily.

It localises to the cytoplasm. It carries out the reaction L-homoserine + ATP = O-phospho-L-homoserine + ADP + H(+). The protein operates within amino-acid biosynthesis; L-threonine biosynthesis; L-threonine from L-aspartate: step 4/5. Functionally, catalyzes the ATP-dependent phosphorylation of L-homoserine to L-homoserine phosphate. The polypeptide is Homoserine kinase (Bacillus cereus (strain ATCC 10987 / NRS 248)).